A 200-amino-acid polypeptide reads, in one-letter code: ATP-dependent Clp protease proteolytic subunit 2 (200 aa).

Ser-99 (nucleophile) is an active-site residue. The active site involves His-123.

Belongs to the peptidase S14 family. Fourteen ClpP subunits assemble into 2 heptameric rings which stack back to back to give a disk-like structure with a central cavity, resembling the structure of eukaryotic proteasomes.

It localises to the cytoplasm. The enzyme catalyses Hydrolysis of proteins to small peptides in the presence of ATP and magnesium. alpha-casein is the usual test substrate. In the absence of ATP, only oligopeptides shorter than five residues are hydrolyzed (such as succinyl-Leu-Tyr-|-NHMec, and Leu-Tyr-Leu-|-Tyr-Trp, in which cleavage of the -Tyr-|-Leu- and -Tyr-|-Trp bonds also occurs).. Its function is as follows. Cleaves peptides in various proteins in a process that requires ATP hydrolysis. Has a chymotrypsin-like activity. Plays a major role in the degradation of misfolded proteins. The chain is ATP-dependent Clp protease proteolytic subunit 2 from Symbiobacterium thermophilum (strain DSM 24528 / JCM 14929 / IAM 14863 / T).